Consider the following 427-residue polypeptide: Phosphatidate cytidylyltransferase, mitochondrial (427 aa).

The segment covering 94–106 (YNRNGDGSTSTEN) has biased composition (polar residues). Residues 94–113 (YNRNGDGSTSTENPSKKEEQ) form a disordered region.

The protein belongs to the TAM41 family. Mg(2+) serves as cofactor.

It is found in the mitochondrion inner membrane. It carries out the reaction a 1,2-diacyl-sn-glycero-3-phosphate + CTP + H(+) = a CDP-1,2-diacyl-sn-glycerol + diphosphate. The protein operates within phospholipid metabolism; CDP-diacylglycerol biosynthesis; CDP-diacylglycerol from sn-glycerol 3-phosphate: step 3/3. In terms of biological role, catalyzes the formation of CDP-diacylglycerol (CDP-DAG) from phosphatidic acid (PA) in the mitochondrial inner membrane. Required for the biosynthesis of the dimeric phospholipid cardiolipin, which stabilizes supercomplexes of the mitochondrial respiratory chain in the mitochondrial inner membrane. This chain is Phosphatidate cytidylyltransferase, mitochondrial, found in Dictyostelium discoideum (Social amoeba).